Reading from the N-terminus, the 275-residue chain is Ribosomal RNA small subunit methyltransferase A (275 aa).

N21, L23, G48, E69, D94, and N115 together coordinate S-adenosyl-L-methionine.

This sequence belongs to the class I-like SAM-binding methyltransferase superfamily. rRNA adenine N(6)-methyltransferase family. RsmA subfamily.

The protein resides in the cytoplasm. It carries out the reaction adenosine(1518)/adenosine(1519) in 16S rRNA + 4 S-adenosyl-L-methionine = N(6)-dimethyladenosine(1518)/N(6)-dimethyladenosine(1519) in 16S rRNA + 4 S-adenosyl-L-homocysteine + 4 H(+). Its function is as follows. Specifically dimethylates two adjacent adenosines (A1518 and A1519) in the loop of a conserved hairpin near the 3'-end of 16S rRNA in the 30S particle. May play a critical role in biogenesis of 30S subunits. This chain is Ribosomal RNA small subunit methyltransferase A, found in Clostridium botulinum (strain Kyoto / Type A2).